The following is a 610-amino-acid chain: Synaptotagmin-like protein 3 (610 aa).

Residues 4 to 123 (EIDLSALKEL…IKTGEWFYEE (120 aa)) form the RabBD domain. Positions 219-239 (RQCVGQTERRSQSDTAVNVTT) are disordered. C2 domains follow at residues 306-428 (VTGE…TQSF) and 462-603 (RPRK…NLWT).

As to quaternary structure, monomer. Binds NRXN1. Binds RAB27A that has been activated by GTP-binding via its N-terminus.

The protein localises to the endomembrane system. In terms of biological role, may act as Rab effector protein and play a role in vesicle trafficking. Binds phospholipids in the presence of calcium ions. This chain is Synaptotagmin-like protein 3 (SYTL3), found in Homo sapiens (Human).